The primary structure comprises 47 residues: Large ribosomal subunit protein bL34 (47 aa).

This sequence belongs to the bacterial ribosomal protein bL34 family.

This is Large ribosomal subunit protein bL34 from Mycobacterium avium (strain 104).